Here is a 148-residue protein sequence, read N- to C-terminus: Probable calcium-binding protein CML7 (148 aa).

EF-hand domains follow at residues 9 to 44 (EQVA…LGGN), 80 to 115 (PFDR…IGEK), and 116 to 148 (LEPH…IVAK). Residues D22, D24, D26, R28, E33, D93, D95, S97, T99, and D104 each coordinate Ca(2+).

In terms of biological role, potential calcium sensor. The chain is Probable calcium-binding protein CML7 (CML7) from Oryza sativa subsp. japonica (Rice).